A 124-amino-acid polypeptide reads, in one-letter code: UPF0102 protein Rcas_2007 (124 aa).

It belongs to the UPF0102 family.

In Roseiflexus castenholzii (strain DSM 13941 / HLO8), this protein is UPF0102 protein Rcas_2007.